Here is a 785-residue protein sequence, read N- to C-terminus: Probable splicing factor 3A subunit 1 (785 aa).

Met1 carries the N-acetylmethionine modification. Residues 1 to 42 (MFSSMQILPLEAPPTDGKLGPLPPSQLTDQEVEERELQAEQN) form a disordered region. Residues 71–113 (IVEKTAQFVSKNGLEFEKRIIVSNEKNAKFNFLKSSDPYHAFY) form an SURP motif 1 repeat. Residues 124-175 (NKDGAQGTDDSDGTTDPQLDTGAADESEAGDTQPDLQAQFRIPSKPLEAPEP) form a disordered region. The SURP motif 2 repeat unit spans residues 193–235 (IIKLTAQFVARNGKSFLTGLSNRENNNPQFHFMKPTHSMFTFF). Disordered regions lie at residues 522 to 554 (NANGEEQGDGVYGDPNSFPGPAALPPPRPGVPI) and 639 to 713 (RPYG…PNEN). Composition is skewed to pro residues over residues 543 to 554 (AALPPPRPGVPI) and 653 to 674 (QPPPMPGMAPPPPPEEAPPPLP). Residues 677–686 (PEAKRQKFDE) are compositionally biased toward basic and acidic residues. The region spanning 707-782 (VSKPNENDGQ…LTLSLRERGG (76 aa)) is the Ubiquitin-like domain.

Component of splicing factor SF3A which is composed of three subunits.

Its subcellular location is the nucleus. This Arabidopsis thaliana (Mouse-ear cress) protein is Probable splicing factor 3A subunit 1.